Consider the following 440-residue polypeptide: uncharacterized protein (440 aa).

Positions 1-19 (MKKLLLAASIIYFASVSLA) are cleaved as a signal peptide.

This is an uncharacterized protein from Rickettsia typhi (strain ATCC VR-144 / Wilmington).